Here is a 266-residue protein sequence, read N- to C-terminus: Early E1A protein (266 aa).

The tract at residues 39-47 (MSLHEMYDL) is interaction with RB1 in competition with E2F1. A PXLXP motif, interaction with host ZMYND11 motif is present at residues 94-98 (PELQP). An LXCXE motif, interaction with host RB1 motif is present at residues 103-107 (LFCYE). Residues 160 to 180 (CSSCDYHRKTSGCPEILCSLC) fold into a zinc finger. Residues 193-244 (VSDSEPDEPDSTTADSNHGSPPTLRCTPPRDLPRPVPVKASPGKRPAVNSLH) form a disordered region. Residues 203–212 (STTADSNHGS) are compositionally biased toward polar residues. The PXDLS motif, CTBP-binding motif lies at 255–259 (PLDLS). Positions 261–265 (KRSRS) match the Nuclear localization signal motif.

The protein belongs to the adenoviridae E1A protein family. In terms of assembly, interacts with host UBE2I; this interaction interferes with polySUMOylation. Interacts with host RB1; this interaction induces the aberrant dissociation of RB1-E2F1 complex thereby disrupting the activity of RB1 and activating E2F1-regulated genes. Interacts with host ATF7; the interaction enhances ATF7-mediated viral transactivation activity which requires the zinc binding domains of both proteins. Isoform early E1A 32 kDa protein and isoform early E1A 26 kDa protein interact (via N-terminus) with CUL1 and E3 ubiquitin ligase RBX1; these interactions inhibit RBX1-CUL1-dependent elongation reaction of ubiquitin chains and attenuate ubiquitination of SCF(FBXW7) target proteins. Interacts (via PXLXP motif) with host ZMYND11/BS69 (via MYND-type zinc finger); this interaction inhibits E1A mediated transactivation. Interacts with host EP300; this interaction stimulates the acetylation of RB1 by recruiting EP300 and RB1 into a multimeric-protein complex. Interacts with host CTBP1 and CTBP2; this interaction seems to potentiate viral replication. Interacts with host DCAF7. Interacts with host DYRK1A. Interacts with host KPNA4; this interaction allows E1A import into the host nucleus. Interacts with host EP400; this interaction stabilizes MYC. Interacts with host TBP protein; this interaction probably disrupts the TBP-TATA complex.

The protein localises to the host nucleus. In terms of biological role, plays a role in viral genome replication by driving entry of quiescent cells into the cell cycle. Stimulation of progression from G1 to S phase allows the virus to efficiently use the cellular DNA replicating machinery to achieve viral genome replication. E1A protein has both transforming and trans-activating activities. Induces the disassembly of the E2F1 transcription factor from RB1 by direct competition for the same binding site on RB1, with subsequent transcriptional activation of E2F1-regulated S-phase genes and of the E2 region of the adenoviral genome. Release of E2F1 leads to the ARF-mediated inhibition of MDM2 and causes TP53/p53 to accumulate because it is not targeted for degradation by MDM2-mediated ubiquitination anymore. This increase in TP53, in turn, would arrest the cell proliferation and direct its death but this effect is counteracted by the viral protein E1B-55K. Inactivation of the ability of RB1 to arrest the cell cycle is critical for cellular transformation, uncontrolled cellular growth and proliferation induced by viral infection. Interaction with RBX1 and CUL1 inhibits ubiquitination of the proteins targeted by SCF(FBXW7) ubiquitin ligase complex, and may be linked to unregulated host cell proliferation. The tumorigenesis-restraining activity of E1A may be related to the disruption of the host CtBP-CtIP complex through the CtBP binding motif. In Simian adenovirus serotype 7 (SAdV-7), this protein is Early E1A protein.